Here is a 788-residue protein sequence, read N- to C-terminus: MGIELLCLFFLFLGRNDHVQGGCALGGAETCEDCLLIGPQCAWCSQENFTYLSGVGERCDTPANLLAKGCQLNFIENPLSQVEILTNKPLSIGRQKNSSSIVQIAPQSLTLKLRPGSEQTLQVQVRQTEDYPVDLYYLMDLSASMDDDLNTIKELGSLLSKEMSKLTSNFRLGFGSFVEKPISPFMKTTPEEIANPCSSIPYFCLPTFGFKHILPLTNDAERFNEIVKNQKISANIDTPEGGFDAIMQAAVCKEKIGWRNDSLHLLVFVSDADSHFGMDSKLAGIVIPNDGLCHLDSKNEYSMSTVLEYPTIGQLIDKLVQNNVLLIFAVTQEQVHLYENYAKLIPGATVGVLQKDSGNILQLIISAYEELRSEVELEVLGDTEGLNLSFTAICNNGTPFPHQKKCSHMKVGDTASFNMTVGIPNCEKRSRHVIVKPVGLGDALEILISPECSCDCQKEVEVNSSKCNHGNGSFQCGVCACNPGHMGPHCECGEDTLSMDSCREAPEHLSCSGRGDCYCGQCTCHLSPYGNIYGPYCQCDDFSCVRHKGLLCGDNGDCECGECVCRSGWTGEYCNCTTSTDQCVSEDGVLCSGRGDCVCGKCICTNPGASGLTCERCPTCGDPCNSKRSCIECHLSADGQAREDCVDKCKLAGATISEEEDFSKDSAVSCSLQGENDCLITFLITTDNEGKTIIHSISEKDCPKPPNSPMIMLGVSLAILLIGVVLLCIWKLLVSFHDRKEVAKFEAERSKAKWQTGTNPLYRGSTSTFKNVTYKHREKQKVDLSMDG.

Residues 1–21 (MGIELLCLFFLFLGRNDHVQG) form the signal peptide. The PSI domain maps to 22–71 (GCALGGAETCEDCLLIGPQCAWCSQENFTYLSGVGERCDTPANLLAKGCQ). Residues 22 to 709 (GCALGGAETC…KDCPKPPNSP (688 aa)) lie on the Extracellular side of the membrane. 28 disulfide bridges follow: cysteine 23–cysteine 41, cysteine 31–cysteine 454, cysteine 34–cysteine 59, cysteine 44–cysteine 70, cysteine 197–cysteine 204, cysteine 252–cysteine 293, cysteine 394–cysteine 406, cysteine 426–cysteine 452, cysteine 456–cysteine 476, cysteine 467–cysteine 479, cysteine 481–cysteine 490, cysteine 492–cysteine 519, cysteine 502–cysteine 517, cysteine 511–cysteine 522, cysteine 524–cysteine 537, cysteine 539–cysteine 560, cysteine 544–cysteine 558, cysteine 552–cysteine 563, cysteine 565–cysteine 574, cysteine 576–cysteine 599, cysteine 583–cysteine 597, cysteine 591–cysteine 602, cysteine 604–cysteine 614, cysteine 617–cysteine 620, cysteine 624–cysteine 670, cysteine 630–cysteine 649, cysteine 633–cysteine 645, and cysteine 678–cysteine 702. Asparagine 48 and asparagine 97 each carry an N-linked (GlcNAc...) asparagine glycan. The region spanning 131–371 (YPVDLYYLMD…QLIISAYEEL (241 aa)) is the VWFA domain. Aspartate 140, serine 142, and serine 144 together coordinate Mg(2+). Residues serine 144, aspartate 147, aspartate 148, and glutamate 179 each coordinate Ca(2+). 4 residues coordinate Ca(2+): asparagine 235, aspartate 237, proline 239, and glutamate 240. Glutamate 240 serves as a coordination point for Mg(2+). The N-linked (GlcNAc...) asparagine glycan is linked to asparagine 260. Ca(2+) contacts are provided by aspartate 271 and lysine 355. The N-linked (GlcNAc...) asparagine glycan is linked to asparagine 387. Asparagine 418 carries N-linked (GlcNAc...) asparagine glycosylation. I-EGF domains lie at 456-491 (CQKEVEVNSSKCNHGNGSFQCGVCACNPGHMGPHCE), 492-538 (CGED…PYCQ), 539-575 (CDDFSCVRHKGLLCGDNGDCECGECVCRSGWTGEYCN), and 576-615 (CTTSTDQCVSEDGVLCSGRGDCVCGKCICTNPGASGLTCE). N-linked (GlcNAc...) asparagine glycosylation is found at asparagine 463 and asparagine 471. A helical transmembrane segment spans residues 710–730 (MIMLGVSLAILLIGVVLLCIW). The tract at residues 731-758 (KLLVSFHDRKEVAKFEAERSKAKWQTGT) is interaction with HAX1. At 731–788 (KLLVSFHDRKEVAKFEAERSKAKWQTGTNPLYRGSTSTFKNVTYKHREKQKVDLSMDG) the chain is on the cytoplasmic side.

The protein belongs to the integrin beta chain family. Heterodimer of an alpha and a beta subunit. Interacts with FLNB. Interacts with HAX1. ITGAV:ITGB6 interacts with FBN1. ITGAV:ITGB6 interacts with TGFB1.

The protein localises to the cell membrane. The protein resides in the cell junction. Its subcellular location is the focal adhesion. Functionally, integrin alpha-V:beta-6 (ITGAV:ITGB6) is a receptor for fibronectin and cytotactin. It recognizes the sequence R-G-D in its ligands. ITGAV:ITGB6 acts as a receptor for fibrillin-1 (FBN1) and mediates R-G-D-dependent cell adhesion to FBN1. Integrin alpha-V:beta-6 (ITGAV:ITGB6) mediates R-G-D-dependent release of transforming growth factor beta-1 (TGF-beta-1) from regulatory Latency-associated peptide (LAP), thereby playing a key role in TGF-beta-1 activation. The sequence is that of Integrin beta-6 (ITGB6) from Sus scrofa (Pig).